The following is a 343-amino-acid chain: Protein RecA (343 aa).

It belongs to the RecA family.

Its subcellular location is the cytoplasm. Can catalyze the hydrolysis of ATP in the presence of single-stranded DNA, the ATP-dependent uptake of single-stranded DNA by duplex DNA, and the ATP-dependent hybridization of homologous single-stranded DNAs. It interacts with LexA causing its activation and leading to its autocatalytic cleavage. The protein is Protein RecA of Coxiella burnetii (strain RSA 493 / Nine Mile phase I).